Here is a 391-residue protein sequence, read N- to C-terminus: Stearoyl-[acyl-carrier-protein] 9-desaturase 6, chloroplastic (391 aa).

A chloroplast-targeting transit peptide spans 1–38 (MLAHKSLLSFTTQWATLMPSPSTFLASRPRGPAKISAV). Fe cation is bound by residues E130, E168, H171, E221, E254, and H257.

The protein belongs to the fatty acid desaturase type 2 family. In terms of assembly, homodimer. Requires Fe(2+) as cofactor.

Its subcellular location is the plastid. The protein resides in the chloroplast. It catalyses the reaction octadecanoyl-[ACP] + 2 reduced [2Fe-2S]-[ferredoxin] + O2 + 2 H(+) = (9Z)-octadecenoyl-[ACP] + 2 oxidized [2Fe-2S]-[ferredoxin] + 2 H2O. Its pathway is lipid metabolism; fatty acid metabolism. Its function is as follows. Converts stearoyl-ACP to oleoyl-ACP by introduction of a cis double bond between carbons 9 and 10 of the acyl chain. The protein is Stearoyl-[acyl-carrier-protein] 9-desaturase 6, chloroplastic (S-ACP-DES6) of Arabidopsis thaliana (Mouse-ear cress).